The following is a 595-amino-acid chain: NADH-quinone oxidoreductase subunit C/D (595 aa).

An NADH dehydrogenase I subunit C region spans residues 1–185 (MTDLTAQAAC…DPFELTKAKQ (185 aa)). The interval 209-595 (DFMFLNLGPN…IDFVMSDVDR (387 aa)) is NADH dehydrogenase I subunit D.

It in the N-terminal section; belongs to the complex I 30 kDa subunit family. In the C-terminal section; belongs to the complex I 49 kDa subunit family. In terms of assembly, NDH-1 is composed of 13 different subunits. Subunits NuoB, CD, E, F, and G constitute the peripheral sector of the complex.

Its subcellular location is the cell inner membrane. It carries out the reaction a quinone + NADH + 5 H(+)(in) = a quinol + NAD(+) + 4 H(+)(out). NDH-1 shuttles electrons from NADH, via FMN and iron-sulfur (Fe-S) centers, to quinones in the respiratory chain. The immediate electron acceptor for the enzyme in this species is believed to be ubiquinone. Couples the redox reaction to proton translocation (for every two electrons transferred, four hydrogen ions are translocated across the cytoplasmic membrane), and thus conserves the redox energy in a proton gradient. The protein is NADH-quinone oxidoreductase subunit C/D of Enterobacter sp. (strain 638).